The sequence spans 217 residues: Ribonuclease HII (217 aa).

Residues 27 to 216 (RTIAGIDEAG…VREHLGESRC (190 aa)) form the RNase H type-2 domain. A divalent metal cation is bound by residues Asp-33, Glu-34, and Asp-125.

This sequence belongs to the RNase HII family. Mn(2+) is required as a cofactor. The cofactor is Mg(2+).

The protein resides in the cytoplasm. It carries out the reaction Endonucleolytic cleavage to 5'-phosphomonoester.. Its function is as follows. Endonuclease that specifically degrades the RNA of RNA-DNA hybrids. The polypeptide is Ribonuclease HII (Geobacter sulfurreducens (strain ATCC 51573 / DSM 12127 / PCA)).